We begin with the raw amino-acid sequence, 170 residues long: ATP synthase subunit b (170 aa).

Residues 15 to 37 (GDILFQLLAMLILLALLKKYALG) form a helical membrane-spanning segment.

It belongs to the ATPase B chain family. F-type ATPases have 2 components, F(1) - the catalytic core - and F(0) - the membrane proton channel. F(1) has five subunits: alpha(3), beta(3), gamma(1), delta(1), epsilon(1). F(0) has three main subunits: a(1), b(2) and c(10-14). The alpha and beta chains form an alternating ring which encloses part of the gamma chain. F(1) is attached to F(0) by a central stalk formed by the gamma and epsilon chains, while a peripheral stalk is formed by the delta and b chains. The F(1)F(0) complex interacts with SpoIIIJ and YqjG; YqgA is found in the same complex.

The protein resides in the cell membrane. Functionally, f(1)F(0) ATP synthase produces ATP from ADP in the presence of a proton or sodium gradient. F-type ATPases consist of two structural domains, F(1) containing the extramembraneous catalytic core and F(0) containing the membrane proton channel, linked together by a central stalk and a peripheral stalk. During catalysis, ATP synthesis in the catalytic domain of F(1) is coupled via a rotary mechanism of the central stalk subunits to proton translocation. Component of the F(0) channel, it forms part of the peripheral stalk, linking F(1) to F(0). This Bacillus subtilis (strain 168) protein is ATP synthase subunit b.